The following is a 310-amino-acid chain: Small ribosomal subunit biogenesis GTPase RsgA (310 aa).

Residues 77–238 form the CP-type G domain; the sequence is LSKQSHILAA…IIDTPGIKGF (162 aa). GTP contacts are provided by residues 126–129 and 180–188; these read NKTD and GNSGVGKST. 4 residues coordinate Zn(2+): cysteine 262, cysteine 267, histidine 269, and cysteine 275.

Belongs to the TRAFAC class YlqF/YawG GTPase family. RsgA subfamily. As to quaternary structure, monomer. Associates with 30S ribosomal subunit, binds 16S rRNA. Requires Zn(2+) as cofactor.

Its subcellular location is the cytoplasm. In terms of biological role, one of several proteins that assist in the late maturation steps of the functional core of the 30S ribosomal subunit. Helps release RbfA from mature subunits. May play a role in the assembly of ribosomal proteins into the subunit. Circularly permuted GTPase that catalyzes slow GTP hydrolysis, GTPase activity is stimulated by the 30S ribosomal subunit. This Phocaeicola vulgatus (strain ATCC 8482 / DSM 1447 / JCM 5826 / CCUG 4940 / NBRC 14291 / NCTC 11154) (Bacteroides vulgatus) protein is Small ribosomal subunit biogenesis GTPase RsgA.